The following is a 624-amino-acid chain: (-)-beta-phellandrene synthase 3, chloroplastic (624 aa).

The N-terminal 48 residues, 1-48 (MAIVSSVPLASKSCLHKSLISSIHKLKPFCRTIPTLGMSRPGKYVMPS), are a transit peptide targeting the chloroplast. The Mg(2+) site is built by Asp-375, Asp-379, and Asp-527. Positions 375–379 (DDMYD) match the DDXXD motif motif.

Belongs to the terpene synthase family. Tpsd subfamily. Mg(2+) serves as cofactor. Requires Mn(2+) as cofactor.

It is found in the plastid. The protein localises to the chloroplast. It carries out the reaction (2E)-geranyl diphosphate = (-)-beta-phellandrene + diphosphate. It participates in terpene metabolism; oleoresin biosynthesis. In terms of biological role, terpene synthase (TPS) involved in the biosynthesis of monoterpene natural products included in conifer oleoresin secretions and volatile emissions; these compounds contribute to biotic and abiotic stress defense against herbivores and pathogens. Catalyzes the conversion of (2E)-geranyl diphosphate (GPP) to (-)-beta-phellandrene. In Picea sitchensis (Sitka spruce), this protein is (-)-beta-phellandrene synthase 3, chloroplastic.